Reading from the N-terminus, the 483-residue chain is Zinc metalloproteinase/disintegrin (483 aa).

The signal sequence occupies residues 1–20 (MIQVLLVTICLAVFPYQGSS). Positions 21 to 190 (IILESGNVND…KASQLYLTPE (170 aa)) are excised as a propeptide. One can recognise a Peptidase M12B domain in the interval 197-395 (RYIELAIVVD…RNPQCILNAP (199 aa)). Residue Glu200 coordinates Ca(2+). The N-linked (GlcNAc...) asparagine glycan is linked to Asn263. Asp284 contributes to the Ca(2+) binding site. Asn293 is a glycosylation site (N-linked (GlcNAc...) asparagine). 3 disulfides stabilise this stretch: Cys308/Cys390, Cys352/Cys374, and Cys354/Cys357. Zn(2+) is bound at residue His333. The active site involves Glu334. The Zn(2+) site is built by His337 and His343. Residues Cys390 and Asn393 each contribute to the Ca(2+) site. The propeptide occupies 396–413 (LRTDTVSTPVSGNEFLEA). Residues 403 to 483 (TPVSGNEFLE…SNDCPRWNDL (81 aa)) form the Disintegrin domain. 6 disulfide bridges follow: Cys417–Cys432, Cys419–Cys427, Cys426–Cys449, Cys440–Cys446, Cys445–Cys470, and Cys458–Cys477. Positions 462 to 464 (RGD) match the Cell attachment site motif.

The protein belongs to the venom metalloproteinase (M12B) family. P-II subfamily. P-IIa sub-subfamily. In terms of assembly, monomeric (disintegrin). Requires Zn(2+) as cofactor. In terms of tissue distribution, expressed by the venom gland.

Its subcellular location is the secreted. Impairs hemostasis in the envenomed animal. In terms of biological role, inhibits platelet aggregation induced by ADP, thrombin, platelet-activating factor and collagen. Acts by inhibiting fibrinogen interaction with platelet receptors GPIIb/GPIIIa (ITGA2B/ITGB3). This Protobothrops flavoviridis (Habu) protein is Zinc metalloproteinase/disintegrin.